Here is a 556-residue protein sequence, read N- to C-terminus: 2-succinyl-5-enolpyruvyl-6-hydroxy-3-cyclohexene-1-carboxylate synthase (556 aa).

The protein belongs to the TPP enzyme family. MenD subfamily. As to quaternary structure, homodimer. The cofactor is Mg(2+). Requires Mn(2+) as cofactor. Thiamine diphosphate is required as a cofactor.

The enzyme catalyses isochorismate + 2-oxoglutarate + H(+) = 5-enolpyruvoyl-6-hydroxy-2-succinyl-cyclohex-3-ene-1-carboxylate + CO2. Its pathway is quinol/quinone metabolism; 1,4-dihydroxy-2-naphthoate biosynthesis; 1,4-dihydroxy-2-naphthoate from chorismate: step 2/7. The protein operates within quinol/quinone metabolism; menaquinone biosynthesis. In terms of biological role, catalyzes the thiamine diphosphate-dependent decarboxylation of 2-oxoglutarate and the subsequent addition of the resulting succinic semialdehyde-thiamine pyrophosphate anion to isochorismate to yield 2-succinyl-5-enolpyruvyl-6-hydroxy-3-cyclohexene-1-carboxylate (SEPHCHC). This Salmonella dublin (strain CT_02021853) protein is 2-succinyl-5-enolpyruvyl-6-hydroxy-3-cyclohexene-1-carboxylate synthase.